Reading from the N-terminus, the 212-residue chain is MSESLDNSAINQLIPEIFDQMRHNAARTRDAKKPSAMVEESGSITTQSLLRELETLDKVIATIRSIDSVVKGALPSHMNKIHHVCKSTNKMLDNWINIQSQAGYAHHIMDSRTGSKTGSNSNEEVVEQYKQEIAELQKSIKMEEDKLIPAQVKGNGNGPTGQRLYGNSYRQPTGRVTKATALRNARNRPSGIPQISSRLTRPTASSNLKRQR.

Residues 118 to 148 (GSNSNEEVVEQYKQEIAELQKSIKMEEDKLI) are a coiled coil. The interval 150–212 (AQVKGNGNGP…TASSNLKRQR (63 aa)) is disordered. Over residues 193–212 (PQISSRLTRPTASSNLKRQR) the composition is skewed to polar residues.

The protein belongs to the DASH complex DUO1 family. In terms of assembly, component of the DASH complex consisting of ASK1, DAD1, DAD2, DAD3, DAD4, DAM1, DUO1, HSK3, SPC19 and SPC34, with a stoichiometry of one copy of each subunit per complex. Multiple DASH complexes oligomerize to form a ring that encircles spindle microtubules and organizes the rod-like NDC80 complexes of the outer kinetochore. DASH complex oligomerization strengthens microtubule attachments. On cytoplasmic microtubules, DASH complexes appear to form patches instead of rings. Within the complex, DAM1 and DUO1 may form the microtubule connections.

Its subcellular location is the nucleus. The protein localises to the cytoplasm. It localises to the cytoskeleton. It is found in the spindle pole. The protein resides in the chromosome. Its subcellular location is the centromere. The protein localises to the kinetochore. Functionally, component of the DASH complex that connects microtubules with kinetochores and couples microtubule depolymerisation to chromosome movement; it is involved in retrieving kinetochores to the spindle poles before their re-orientation on the spindle in early mitosis and allows microtubule depolymerization to pull chromosomes apart and resist detachment during anaphase. Kinetochores, consisting of a centromere-associated inner segment and a microtubule-contacting outer segment, play a crucial role in chromosome segregation by mediating the physical connection between centromeric DNA and microtubules. Kinetochores also serve as an input point for the spindle assembly checkpoint, which delays anaphase until all chromosomes have bioriented on the mitotic spindle. This chain is DASH complex subunit DUO1 (DUO1), found in Candida glabrata (strain ATCC 2001 / BCRC 20586 / JCM 3761 / NBRC 0622 / NRRL Y-65 / CBS 138) (Yeast).